Consider the following 681-residue polypeptide: Calpain-C (681 aa).

In terms of domain architecture, Calpain catalytic spans 18-331 (LWEDPDFPAV…FSTMEVVYLD (314 aa)). Residues 332-481 (TETSNDEEML…ILGTGSFRLS (150 aa)) are domain III. A linker region spans residues 482–514 (CLETQTMILLDPFPALKSTDAERCGGPKVKSVC). The interval 515 to 681 (QYEPVYMQLA…HDWIKSILSC (167 aa)) is domain IV. An EF-hand domain is found at 552–587 (ANIDICRQVIALQDRSGSGRITFQQFKTFMVNLKSW). Ca(2+) is bound by residues D565, S567, S569, and R571.

It belongs to the peptidase C2 family. Localized to the salivary glands in the larva.

The protein localises to the cytoplasm. Functionally, not known; does not seem to have protease activity. This chain is Calpain-C, found in Drosophila melanogaster (Fruit fly).